A 302-amino-acid polypeptide reads, in one-letter code: Succinate--CoA ligase [ADP-forming] subunit alpha (302 aa).

Residues threonine 17–threonine 20, lysine 43, and isoleucine 96–glutamate 98 each bind CoA. Tyrosine 159 contacts substrate. The active-site Tele-phosphohistidine intermediate is the histidine 247.

The protein belongs to the succinate/malate CoA ligase alpha subunit family. Heterotetramer of two alpha and two beta subunits.

It carries out the reaction succinate + ATP + CoA = succinyl-CoA + ADP + phosphate. The catalysed reaction is GTP + succinate + CoA = succinyl-CoA + GDP + phosphate. It functions in the pathway carbohydrate metabolism; tricarboxylic acid cycle; succinate from succinyl-CoA (ligase route): step 1/1. Functionally, succinyl-CoA synthetase functions in the citric acid cycle (TCA), coupling the hydrolysis of succinyl-CoA to the synthesis of either ATP or GTP and thus represents the only step of substrate-level phosphorylation in the TCA. The alpha subunit of the enzyme binds the substrates coenzyme A and phosphate, while succinate binding and nucleotide specificity is provided by the beta subunit. The chain is Succinate--CoA ligase [ADP-forming] subunit alpha from Staphylococcus epidermidis (strain ATCC 35984 / DSM 28319 / BCRC 17069 / CCUG 31568 / BM 3577 / RP62A).